The chain runs to 299 residues: uncharacterized protein (299 aa).

This is an uncharacterized protein from Bacillus subtilis (strain 168).